A 146-amino-acid polypeptide reads, in one-letter code: HTH-type transcriptional regulator NsrR (146 aa).

Residues 2 to 133 enclose the HTH rrf2-type domain; the sequence is KLTNYTDYSL…DKYTLRDLVK (132 aa). Positions 28–51 form a DNA-binding region, H-T-H motif; it reads IKQIAETYSISKNHLMKVIYRLGQ. [2Fe-2S] cluster contacts are provided by Cys-92, Cys-100, and Cys-106.

[2Fe-2S] cluster is required as a cofactor.

Nitric oxide-responsive transcriptional regulator. It represses the expression of flavohemoprotein hmp and the nitrite reductase nasD. Probably plays a role in the up-regulation of the resDE regulon in the presence of nitric oxide. The chain is HTH-type transcriptional regulator NsrR (nsrR) from Bacillus subtilis (strain 168).